Here is a 359-residue protein sequence, read N- to C-terminus: Aminomethyltransferase (359 aa).

The protein belongs to the GcvT family. The glycine cleavage system is composed of four proteins: P, T, L and H.

It catalyses the reaction N(6)-[(R)-S(8)-aminomethyldihydrolipoyl]-L-lysyl-[protein] + (6S)-5,6,7,8-tetrahydrofolate = N(6)-[(R)-dihydrolipoyl]-L-lysyl-[protein] + (6R)-5,10-methylene-5,6,7,8-tetrahydrofolate + NH4(+). In terms of biological role, the glycine cleavage system catalyzes the degradation of glycine. This is Aminomethyltransferase from Idiomarina loihiensis (strain ATCC BAA-735 / DSM 15497 / L2-TR).